Reading from the N-terminus, the 214-residue chain is Thymidylate kinase (214 aa).

An ATP-binding site is contributed by 13–20 (GPDACGKS).

The protein belongs to the thymidylate kinase family.

It carries out the reaction dTMP + ATP = dTDP + ADP. Its function is as follows. Phosphorylation of dTMP to form dTDP in both de novo and salvage pathways of dTTP synthesis. This is Thymidylate kinase from Malacoplasma penetrans (strain HF-2) (Mycoplasma penetrans).